A 535-amino-acid polypeptide reads, in one-letter code: Glutamyl-tRNA reductase 3, chloroplastic (535 aa).

Cysteine 131 (nucleophile) is an active-site residue. Substrate is bound by residues 131 to 133, serine 190, 195 to 197, and glutamine 201; these read CNR and EGQ. 272–277 provides a ligand contact to NADP(+); the sequence is GAGKMG.

Belongs to the glutamyl-tRNA reductase family. In terms of tissue distribution, primarily expressed in roots.

The protein localises to the plastid. Its subcellular location is the chloroplast. It catalyses the reaction (S)-4-amino-5-oxopentanoate + tRNA(Glu) + NADP(+) = L-glutamyl-tRNA(Glu) + NADPH + H(+). Its pathway is porphyrin-containing compound metabolism; protoporphyrin-IX biosynthesis; 5-aminolevulinate from L-glutamyl-tRNA(Glu): step 1/2. Functionally, catalyzes the NADPH-dependent reduction of glutamyl-tRNA(Glu) to glutamate 1-semialdehyde (GSA). The chain is Glutamyl-tRNA reductase 3, chloroplastic (HEMA3) from Hordeum vulgare (Barley).